A 372-amino-acid polypeptide reads, in one-letter code: Flap endonuclease 1 (372 aa).

Positions 1–105 are N-domain; that stretch reads MGVKGLNQLI…GELEKRLLRR (105 aa). Aspartate 34 is a Mg(2+) binding site. DNA-binding residues include arginine 47 and arginine 71. Mg(2+)-binding residues include aspartate 87, glutamate 159, glutamate 161, aspartate 180, and aspartate 182. The interval 123–254 is I-domain; the sequence is EVLKFEKRLV…ATAFKLIKEH (132 aa). A DNA-binding site is contributed by glutamate 159. DNA-binding residues include glycine 232 and aspartate 234. Aspartate 234 is a binding site for Mg(2+). Residues 339 to 347 are interaction with PCNA; that stretch reads VQGRLDGFF.

It belongs to the XPG/RAD2 endonuclease family. FEN1 subfamily. As to quaternary structure, interacts with PCNA. Three molecules of RAD27 bind to one PCNA trimer with each molecule binding to one PCNA monomer. PCNA stimulates the nuclease activity without altering cleavage specificity. Mg(2+) is required as a cofactor. In terms of processing, phosphorylated. Phosphorylation upon DNA damage induces relocalization to the nuclear plasma.

It is found in the nucleus. Its subcellular location is the nucleolus. It localises to the nucleoplasm. The protein localises to the mitochondrion. In terms of biological role, structure-specific nuclease with 5'-flap endonuclease and 5'-3' exonuclease activities involved in DNA replication and repair. During DNA replication, cleaves the 5'-overhanging flap structure that is generated by displacement synthesis when DNA polymerase encounters the 5'-end of a downstream Okazaki fragment. It enters the flap from the 5'-end and then tracks to cleave the flap base, leaving a nick for ligation. Also involved in the long patch base excision repair (LP-BER) pathway, by cleaving within the apurinic/apyrimidinic (AP) site-terminated flap. Acts as a genome stabilization factor that prevents flaps from equilibrating into structures that lead to duplications and deletions. Also possesses 5'-3' exonuclease activity on nicked or gapped double-stranded DNA, and exhibits RNase H activity. Also involved in replication and repair of rDNA and in repairing mitochondrial DNA. This is Flap endonuclease 1 from Candida dubliniensis (strain CD36 / ATCC MYA-646 / CBS 7987 / NCPF 3949 / NRRL Y-17841) (Yeast).